The following is a 564-amino-acid chain: E3 ubiquitin-protein ligase hrd-like protein 1 (564 aa).

Residues 17–37 form a helical membrane-spanning segment; sequence SYLALSVLVAIVASVTVFTTF. N53 carries N-linked (GlcNAc...) asparagine glycosylation. The next 7 membrane-spanning stretches (helical) occupy residues 61 to 81, 86 to 106, 123 to 143, 148 to 168, 185 to 205, 215 to 235, and 272 to 292; these read YGLNIEALSGHTFFQIAHYIL, LIWVAINSYFAILAVCTRLII, QAFFCYVLLTIVYLSVVIGPQ, VMPWMIWGGICAFLSHLQFIT, KISFLSLFLFFVSIAMTFLIS, PAVLLYFDCLLAVFRSTYILF, and LSFAQLLAFSPGLNLTSIFFL. The RING-type; atypical zinc-finger motif lies at 335–373; the sequence is CVVCWELLGTSRRLPCSHQFHDWCLMWWLAQDSSCPTCR. The region spanning 432–474 is the CUE domain; that stretch reads QLQTMLEQVREMFPQMSVDIIMTDLRQSGSAQSTIENILEGRI.

Its subcellular location is the membrane. In terms of biological role, proposed to have a role in neuroprotection. This chain is E3 ubiquitin-protein ligase hrd-like protein 1 (hrdl-1), found in Caenorhabditis elegans.